Consider the following 194-residue polypeptide: Imidazoleglycerol-phosphate dehydratase (194 aa).

It belongs to the imidazoleglycerol-phosphate dehydratase family.

The protein resides in the cytoplasm. It catalyses the reaction D-erythro-1-(imidazol-4-yl)glycerol 3-phosphate = 3-(imidazol-4-yl)-2-oxopropyl phosphate + H2O. It participates in amino-acid biosynthesis; L-histidine biosynthesis; L-histidine from 5-phospho-alpha-D-ribose 1-diphosphate: step 6/9. This is Imidazoleglycerol-phosphate dehydratase from Thermoanaerobacter sp. (strain X514).